The chain runs to 765 residues: Palmitoyltransferase ZDHHC8 (765 aa).

Topologically, residues 1–13 (MPRSPGTRLKPAK) are cytoplasmic. The chain crosses the membrane as a helical span at residues 14-34 (YIPVATAAALLVGSSTLFFVF). The Lumenal portion of the chain corresponds to 35–52 (TCPWLTRAVSPAVPVYNG). Residues 53-73 (IIFLFVLANFSMATFMDPGVF) traverse the membrane as a helical segment. The Cytoplasmic portion of the chain corresponds to 74 to 148 (PRADEDEDKE…NCIGRRNYRY (75 aa)). The DHHC domain maps to 104–154 (KWCATCHFYRPPRCSHCSVCDNCVEDFDHHCPWVNNCIGRRNYRYFFLFLL). C134 functions as the S-palmitoyl cysteine intermediate in the catalytic mechanism. Residues 149 to 169 (FFLFLLSLSAHMVGVVAFGLV) form a helical membrane-spanning segment. Residues 170-190 (YVLNHAEGLGAAHTTITMAVM) are Lumenal-facing. The helical transmembrane segment at 191–211 (CVAGLFFIPVIGLTGFHVVLV) threads the bilayer. Topologically, residues 212–765 (TRGRTTNEQV…VGGTTYEISV (554 aa)) are cytoplasmic. The tract at residues 293 to 352 (GLGRSKSKGSLDRLDEKPLDLGPPLPPKIEAGTFSSDLQTPRPGSAESALSVQRTSPPTP) is disordered. Over residues 301-311 (GSLDRLDEKPL) the composition is skewed to basic and acidic residues. Position 337 is a phosphoserine (S337). R441 is subject to Omega-N-methylarginine. Positions 509–540 (LHPGATGDPPRPLPRSFSPVLGPRPREPSPVR) are disordered. S606, S627, S675, S725, and S743 each carry phosphoserine. The tract at residues 613 to 746 (GPGFGGARNP…PPGPSASPTR (134 aa)) is disordered. Low complexity predominate over residues 622–653 (PALQTSLSSLSSSVSRAPRTSSSSLQADQASS).

This sequence belongs to the DHHC palmitoyltransferase family. ERF2/ZDHHC9 subfamily.

The protein resides in the golgi apparatus membrane. Its subcellular location is the mitochondrion membrane. The catalysed reaction is L-cysteinyl-[protein] + hexadecanoyl-CoA = S-hexadecanoyl-L-cysteinyl-[protein] + CoA. Functionally, palmitoyltransferase that catalyzes the addition of palmitate onto various protein substrates and therefore functions in several unrelated biological processes. Through the palmitoylation of ABCA1 regulates the localization of the transporter to the plasma membrane and thereby regulates its function in cholesterol and phospholipid efflux. Could also pamitoylate the D(2) dopamine receptor DRD2 and regulate its stability and localization to the plasma membrane. Could also play a role in glutamatergic transmission. In Pan troglodytes (Chimpanzee), this protein is Palmitoyltransferase ZDHHC8.